The following is a 1074-amino-acid chain: Calcium-transporting ATPase 8, plasma membrane-type (1074 aa).

The interval 1-33 is disordered; it reads MTSLLKSSPGRRRGGDVESGKSEHADSDSDTFY. The Cytoplasmic segment spans residues 1 to 180; that stretch reads MTSLLKSSPG…NTYPRKKGKG (180 aa). Residues 13-27 are compositionally biased toward basic and acidic residues; the sequence is RGGDVESGKSEHADS. Residues 43 to 54 are interaction with calmodulin; it reads RLQQWRKAALVL. The chain crosses the membrane as a helical span at residues 181 to 201; sequence FLRFLWDACHDLTLIILMVAA. The Extracellular segment spans residues 202 to 219; sequence VASLALGIKTEGIKEGWY. The helical transmembrane segment at 220-240 threads the bilayer; the sequence is DGGSIAFAVILVIVVTAVSDY. Over 241 to 369 the chain is Cytoplasmic; sequence KQSLQFQNLN…GEETPLQVRL (129 aa). A helical membrane pass occupies residues 370–389; sequence NGVATFIGSIGLAVAAAVLV. Over 390 to 426 the chain is Extracellular; sequence ILLTRYFTGHTKDNNGGPQFVKGKTKVGHVIDDVVKV. A helical transmembrane segment spans residues 427 to 444; the sequence is LTVAVTIVVVAVPEGLPL. Residues 445-840 are Cytoplasmic-facing; it reads AVTLTLAYSM…RWGRSVYANI (396 aa). The active-site 4-aspartylphosphate intermediate is Asp-482. Asp-785 and Asp-789 together coordinate Mg(2+). The helical transmembrane segment at 841-859 threads the bilayer; it reads QKFIQFQLTVNVAALVINV. Residues 860-870 are Extracellular-facing; sequence VAAISSGDVPL. The chain crosses the membrane as a helical span at residues 871–891; that stretch reads TAVQLLWVNLIMDTLGALALA. The Cytoplasmic segment spans residues 892–911; the sequence is TEPPTDHLMGRPPVGRKEPL. The chain crosses the membrane as a helical span at residues 912-934; that stretch reads ITNIMWRNLLIQAIYQVSVLLTL. The Extracellular portion of the chain corresponds to 935-949; it reads NFRGISILGLEHEVH. A helical membrane pass occupies residues 950-971; that stretch reads EHATRVKNTIIFNAFVLCQAFN. Over 972 to 989 the chain is Cytoplasmic; it reads EFNARKPDEKNIFKGVIK. The chain crosses the membrane as a helical span at residues 990–1011; it reads NRLFMGIIVITLVLQVIIVEFL. The Extracellular segment spans residues 1012 to 1021; it reads GKFASTTKLN. The chain crosses the membrane as a helical span at residues 1022-1043; sequence WKQWLICVGIGVISWPLALVGK. The Cytoplasmic portion of the chain corresponds to 1044–1074; that stretch reads FIPVPAAPISNKLKVLKFWGKKKNSSGEGSL.

The protein belongs to the cation transport ATPase (P-type) (TC 3.A.3) family. Type IIB subfamily.

The protein resides in the cell membrane. The enzyme catalyses Ca(2+)(in) + ATP + H2O = Ca(2+)(out) + ADP + phosphate + H(+). Activated by calmodulin. In terms of biological role, this magnesium-dependent enzyme catalyzes the hydrolysis of ATP coupled with the translocation of calcium from the cytosol out of the cell. The protein is Calcium-transporting ATPase 8, plasma membrane-type (ACA8) of Arabidopsis thaliana (Mouse-ear cress).